The chain runs to 518 residues: Membrane-bound lytic murein transglycosylase F (518 aa).

Residues 1-21 (MKKLKINYLFIGILALLLAVA) form the signal peptide. Residues 22-269 (LWPSIPWFGK…RIEEKYLGHG (248 aa)) form a non-LT domain region. The LT domain stretch occupies residues 270–518 (DDFDYVDTRT…SRKGSEEKQN (249 aa)). Glu314 is a catalytic residue.

In the N-terminal section; belongs to the bacterial solute-binding protein 3 family. The protein in the C-terminal section; belongs to the transglycosylase Slt family.

It is found in the cell outer membrane. The catalysed reaction is Exolytic cleavage of the (1-&gt;4)-beta-glycosidic linkage between N-acetylmuramic acid (MurNAc) and N-acetylglucosamine (GlcNAc) residues in peptidoglycan, from either the reducing or the non-reducing ends of the peptidoglycan chains, with concomitant formation of a 1,6-anhydrobond in the MurNAc residue.. Its function is as follows. Murein-degrading enzyme that degrades murein glycan strands and insoluble, high-molecular weight murein sacculi, with the concomitant formation of a 1,6-anhydromuramoyl product. Lytic transglycosylases (LTs) play an integral role in the metabolism of the peptidoglycan (PG) sacculus. Their lytic action creates space within the PG sacculus to allow for its expansion as well as for the insertion of various structures such as secretion systems and flagella. The protein is Membrane-bound lytic murein transglycosylase F of Shigella sonnei (strain Ss046).